The chain runs to 339 residues: Cyclic AMP-dependent transcription factor ATF-4 (339 aa).

Disordered stretches follow at residues Gly-14–Leu-62, Pro-153–Val-182, and Gln-209–Asp-313. Low complexity predominate over residues Val-35–Ser-55. The span at Ser-162–Glu-173 shows a compositional bias: pro residues. The segment covering Ile-211 to Ser-226 has biased composition (low complexity). Residues Ser-231–Pro-247 show a composition bias toward basic and acidic residues. The bZIP domain occupies Val-266–Met-329. A basic motif region spans residues Lys-268 to Arg-288. Positions Leu-294 to Leu-322 are leucine-zipper. Over residues Glu-300 to Asp-313 the composition is skewed to basic and acidic residues.

The protein belongs to the bZIP family. Binds DNA as a homodimer and as a heterodimer.

Its subcellular location is the nucleus. Functionally, transcription factor that binds the cAMP response element (CRE) (consensus: 5'-GTGACGT[AC][AG]-3') and displays two biological functions, as regulator of metabolic and redox processes under normal cellular conditions, and as master transcription factor during integrated stress response (ISR). Binds to asymmetric CRE's as a heterodimer and to palindromic CRE's as a homodimer. Core effector of the ISR, which is required for adaptation to various stress such as endoplasmic reticulum (ER) stress, amino acid starvation, mitochondrial stress or oxidative stress. During ISR, atf4 translation is induced via an alternative ribosome translation re-initiation mechanism in response to eif2s1/eIF-2-alpha phosphorylation, and stress-induced atf4 acts as a master transcription factor of stress-responsive genes in order to promote cell recovery. Promotes the transcription of genes linked to amino acid sufficiency and resistance to oxidative stress to protect cells against metabolic consequences of ER oxidation. In the absence of stress, atf4 translation is at low levels and it is required for normal metabolic processes such as embryonic lens formation, fetal liver hematopoiesis, bone development and synaptic plasticity. Acts as a regulator of osteoblast differentiation by promoting expression of osteoblast-specific genes. Regulates the circadian expression of the core clock components. Mainly acts as a transcriptional activator in cellular stress adaptation, but it can also act as a transcriptional repressor. In Danio rerio (Zebrafish), this protein is Cyclic AMP-dependent transcription factor ATF-4 (atf4).